The sequence spans 169 residues: Protein AIG2 B (169 aa).

15-20 contacts substrate; sequence YGSFQE. The Proton acceptor role is filled by E83.

Belongs to the gamma-glutamylcyclotransferase family. Expressed in roots, leaves and stems.

In terms of biological role, putative gamma-glutamylcyclotransferase. This chain is Protein AIG2 B, found in Arabidopsis thaliana (Mouse-ear cress).